The primary structure comprises 454 residues: MDSYVIQTNVNDSLPSVLDVRVNIGGRSSVQGRAKGRKARWNVRPSDMSNKTFNPIRAIVDNMKVKPNPNKTVISLSIGDPTVFGNLPTDPEVTQAMKDALDSGKYNGYAPSIGYLSSREEVASYYHCPEAPLEAKDVILTSGCSQAIELCLAVLANPGQNILIPRPGFSLYRTLAESMGIEVKLYNLLPEKSWEIDLKQLESLIDEKTACLVVNNPSNPCGSVFSKRHLQKILAVAERQCVPILADEIYGDMVFSDCKYEPMATLSTNVPILSCGGLAKRWLVPGWRLGWILIHDRRDIFGNEIRDGLVKLSQRILGPCTIVQGALKSILQRTPQEFYQDTLSFLKSNADLCYGALSAIPGLQPVRPSGAMYLMVGIEMEHFPEFENDVEFTERLIAEQSVHCLPATCFEYPNFFRVVITVPEVMMLEACSRIQEFCEQHYHCAEGSQEECDK.

Methionine 1 is modified (N-acetylmethionine). N6-(pyridoxal phosphate)lysine is present on lysine 280. At serine 448 the chain carries Phosphoserine.

This sequence belongs to the class-I pyridoxal-phosphate-dependent aminotransferase family. In terms of assembly, homodimer. It depends on pyridoxal 5'-phosphate as a cofactor.

It carries out the reaction L-tyrosine + 2-oxoglutarate = 3-(4-hydroxyphenyl)pyruvate + L-glutamate. It participates in amino-acid degradation; L-phenylalanine degradation; acetoacetate and fumarate from L-phenylalanine: step 2/6. Functionally, transaminase involved in tyrosine breakdown. Converts tyrosine to p-hydroxyphenylpyruvate. Can catalyze the reverse reaction, using glutamic acid, with 2-oxoglutarate as cosubstrate (in vitro). Has much lower affinity and transaminase activity for phenylalanine. The polypeptide is Tyrosine aminotransferase (Tat) (Mus musculus (Mouse)).